A 446-amino-acid polypeptide reads, in one-letter code: Xylose isomerase 1 (446 aa).

Active-site residues include His-109 and Asp-112. Mg(2+)-binding residues include Glu-240, Glu-276, His-279, Asp-304, Asp-315, Asp-317, and Asp-347.

Belongs to the xylose isomerase family. Homotetramer. Requires Mg(2+) as cofactor.

It is found in the cytoplasm. The enzyme catalyses alpha-D-xylose = alpha-D-xylulofuranose. This Xanthomonas campestris pv. campestris (strain 8004) protein is Xylose isomerase 1.